The primary structure comprises 260 residues: Phosphatidate cytidylyltransferase (260 aa).

A run of 7 helical transmembrane segments spans residues 9 to 29 (IIAL…LMIF), 46 to 66 (MIKF…IIML), 70 to 90 (AGPW…FIVL), 102 to 122 (FMDA…FMFF), 130 to 150 (LHYI…AYLF), 172 to 192 (FIGG…FVDF), and 196 to 216 (VWIL…GDLV).

This sequence belongs to the CDS family.

Its subcellular location is the cell membrane. It catalyses the reaction a 1,2-diacyl-sn-glycero-3-phosphate + CTP + H(+) = a CDP-1,2-diacyl-sn-glycerol + diphosphate. It functions in the pathway phospholipid metabolism; CDP-diacylglycerol biosynthesis; CDP-diacylglycerol from sn-glycerol 3-phosphate: step 3/3. This chain is Phosphatidate cytidylyltransferase (cdsA), found in Staphylococcus aureus (strain COL).